Reading from the N-terminus, the 1226-residue chain is Arf guanine nucleotide exchange factor SYT1 (1226 aa).

Disordered regions lie at residues 17 to 39 (HSND…DKLR) and 113 to 158 (RNGQ…RNSK). Basic and acidic residues predominate over residues 131–142 (SIEKVPKPDGER). T277 carries the phosphothreonine modification. 3 disordered regions span residues 311-405 (NSLM…TGMS), 954-1022 (STGS…NEDY), and 1178-1198 (LEHG…DGID). The segment covering 349 to 360 (LSRSRSQSTSFV) has biased composition (polar residues). Residue S369 is modified to Phosphoserine. The segment covering 386-405 (GPTSVYNNKSNANSTITGMS) has biased composition (polar residues). The SEC7 domain maps to 405-620 (SRRSSSIVNA…TYFYENVTAK (216 aa)). One can recognise a PH domain in the interval 844–1074 (ILQMGAIMNL…DSINLFSAYD (231 aa)). Low complexity-rich tracts occupy residues 956–969 (GSHT…SSSA) and 994–1017 (SSVS…SSND).

It localises to the cytoplasm. With respect to regulation, inhibited by brefeldin A. Functionally, guanine nucleotide exchange factor for Arf GTPases, stimulating the nucleotide exchange from the GDP-bound to the GTP-bound form. Catalyzes both the GDP release by and the GTP binding to ARF2. Has no exchange activity on Rab GTPases. Involved in vesicular transport. The chain is Arf guanine nucleotide exchange factor SYT1 (SYT1) from Saccharomyces cerevisiae (strain ATCC 204508 / S288c) (Baker's yeast).